Reading from the N-terminus, the 299-residue chain is Taste receptor type 2 member 50 (299 aa).

Position 1 (Met1) is a topological domain, extracellular. Residues 2 to 22 (ITFLYIFFSILILVLFVLGNF) form a helical membrane-spanning segment. Topologically, residues 23 to 55 (ANGFIALVNFIDWVKRKKISSADQILTALAVSR) are cytoplasmic. A helical transmembrane segment spans residues 56-76 (IGLLWALLLNWYLTVLNPAFY). Residues 77–87 (SVELRITSYNA) lie on the Extracellular side of the membrane. Residues 88-108 (WVVTNHFSMWLAASLSIFYLL) traverse the membrane as a helical segment. Topologically, residues 109–126 (KIANFSNLIFLHLKRRVR) are cytoplasmic. A helical transmembrane segment spans residues 127 to 147 (SVILVILLGTLIFLVCHLLVA). Residues 148–181 (NMDESMWAEEYEGNMTGKMKLRNTVHLSYLTVTT) lie on the Extracellular side of the membrane. Asn161 carries N-linked (GlcNAc...) asparagine glycosylation. Residues 182-202 (LWSFIPFTLSLISFLMLICSL) traverse the membrane as a helical segment. Residues 203 to 229 (CKHLKKMQLHGEGSQDLSTKVHIKALQ) lie on the Cytoplasmic side of the membrane. A helical transmembrane segment spans residues 230 to 250 (TLISFLLLCAIFFLFLIISVW). At 251–259 (SPRRLQNDP) the chain is on the extracellular side. Residues 260–280 (VVMVSKAVGNIYLAFDSFILI) traverse the membrane as a helical segment. Residues 281-299 (WRTKKLKHTFLLILCQIRC) lie on the Cytoplasmic side of the membrane.

This sequence belongs to the G-protein coupled receptor T2R family.

The protein resides in the membrane. Receptor that may play a role in the perception of bitterness and is gustducin-linked. May play a role in sensing the chemical composition of the gastrointestinal content. The activity of this receptor may stimulate alpha gustducin, mediate PLC-beta-2 activation and lead to the gating of TRPM5. The chain is Taste receptor type 2 member 50 (TAS2R50) from Gorilla gorilla gorilla (Western lowland gorilla).